The primary structure comprises 706 residues: Choline transporter-like protein 2 (706 aa).

Topologically, residues 1-33 (MGDERPHYYGKHGTPQKYDPTFKGPIYNRGCTD) are cytoplasmic. Thr-14 is modified (phosphothreonine). A helical transmembrane segment spans residues 34-54 (IICCVFLLLAIVGYVAVGIIA). Residues 55–232 (WTHGDPRKVI…RIFEDYTVSW (178 aa)) lie on the Extracellular side of the membrane. Asn-187 and Asn-200 each carry an N-linked (GlcNAc...) asparagine glycan. Residues 233–253 (YWIIIGLVIAMAMSLLFIILL) form a helical membrane-spanning segment. Residues 254–256 (RFL) are Cytoplasmic-facing. A helical membrane pass occupies residues 257 to 277 (AGIMVWVMIIMVILVLGYGIF). The Extracellular segment spans residues 278–315 (HCYMEYSRLRGEAGSDVSLVDLGFQTDFRVYLHLRQTW). Residues 316–336 (LAFMIILSILEVIIILLLIFL) form a helical membrane-spanning segment. The Cytoplasmic segment spans residues 337–364 (RKRILIAIALIKEASRAVGYVMCSLLYP). The helical transmembrane segment at 365–385 (LVTFFLLCLCIAYWASTAVFL) threads the bilayer. Over 386-457 (STSNEAVYKI…FNAFMFFWLA (72 aa)) the chain is Extracellular. Asn-417 is a glycosylation site (N-linked (GlcNAc...) asparagine). Residues 458–480 (NFVLALGQVTLAGAFASYYWALR) traverse the membrane as a helical segment. The Cytoplasmic portion of the chain corresponds to 481 to 504 (KPDDLPAFPLFSAFGRALRYHTGS). A helical membrane pass occupies residues 505-525 (LAFGALILAIVQIIRVILEYL). The Extracellular segment spans residues 526–563 (DQRLKAAENKFAKCLMTCLKCCFWCLEKFIKFLNRNAY). The helical transmembrane segment at 564-584 (IMIAIYGTNFCTSARNAFFLL) threads the bilayer. The Cytoplasmic segment spans residues 585–599 (MRNIIRVAVLDKVTD). Residues 600 to 620 (FLFLLGKLLIVGSVGILAFFF) form a helical membrane-spanning segment. Over 621–638 (FTHRIRIVQDTAPPLNYY) the chain is Extracellular. Residues 639-659 (WVPILTVIVGSYLIAHGFFSV) form a helical membrane-spanning segment. At 660 to 706 (YGMCVDTLFLCFLEDLERNDGSAERPYFMSSTLKKLLNKTNKKAAES) the chain is on the cytoplasmic side.

Belongs to the CTL (choline transporter-like) family. Interacts with COCH. Present in supporting cells of the inner ear (at protein level). As to expression, expressed in inner ear vestibular tissue.

It localises to the cell membrane. The protein localises to the mitochondrion outer membrane. It carries out the reaction choline(out) + n H(+)(in) = choline(in) + n H(+)(out). The catalysed reaction is ethanolamine(out) + n H(+)(in) = ethanolamine(in) + n H(+)(out). Its function is as follows. Choline/H+ antiporter, mainly in mitochodria. Also acts as a low-affinity ethanolamine/H+ antiporter, regulating the supply of extracellular ethanolamine (Etn) for the CDP-Etn pathway, redistribute intracellular Etn and balance the CDP-Cho and CDP-Etn arms of the Kennedy pathway. In terms of biological role, does not exhibit choline transporter activity. This chain is Choline transporter-like protein 2, found in Homo sapiens (Human).